The primary structure comprises 604 residues: Elongation factor 4 (604 aa).

Residues 4–186 (EFIRNFSIIA…AIVHLVPPPK (183 aa)) enclose the tr-type G domain. GTP contacts are provided by residues 16–21 (DHGKST) and 133–136 (NKID).

The protein belongs to the TRAFAC class translation factor GTPase superfamily. Classic translation factor GTPase family. LepA subfamily.

Its subcellular location is the cell inner membrane. The catalysed reaction is GTP + H2O = GDP + phosphate + H(+). Its function is as follows. Required for accurate and efficient protein synthesis under certain stress conditions. May act as a fidelity factor of the translation reaction, by catalyzing a one-codon backward translocation of tRNAs on improperly translocated ribosomes. Back-translocation proceeds from a post-translocation (POST) complex to a pre-translocation (PRE) complex, thus giving elongation factor G a second chance to translocate the tRNAs correctly. Binds to ribosomes in a GTP-dependent manner. The sequence is that of Elongation factor 4 from Solibacter usitatus (strain Ellin6076).